The sequence spans 1009 residues: Epididymis-specific alpha-mannosidase (1009 aa).

A signal peptide spans 1–23 (MGQLCWLPLLAPLLLLRPPGVQS). Zn(2+) is bound by residues histidine 36, aspartate 38, and aspartate 151. Aspartate 151 acts as the Nucleophile in catalysis. Residues asparagine 226, asparagine 249, asparagine 294, and asparagine 336 are each glycosylated (N-linked (GlcNAc...) asparagine). A Zn(2+)-binding site is contributed by histidine 420. Residues asparagine 516, asparagine 608, asparagine 670, asparagine 675, asparagine 748, asparagine 808, asparagine 812, and asparagine 890 are each glycosylated (N-linked (GlcNAc...) asparagine). Positions 972 to 991 (GPGRHRGDTTSPSRPPGGPI) are disordered.

Belongs to the glycosyl hydrolase 38 family. Zn(2+) is required as a cofactor.

It localises to the secreted. The enzyme catalyses Hydrolysis of terminal, non-reducing alpha-D-mannose residues in alpha-D-mannosides.. The sequence is that of Epididymis-specific alpha-mannosidase (MAN2B2) from Homo sapiens (Human).